Reading from the N-terminus, the 577-residue chain is Proline--tRNA ligase (577 aa).

This sequence belongs to the class-II aminoacyl-tRNA synthetase family. ProS type 1 subfamily. Homodimer.

The protein localises to the cytoplasm. The enzyme catalyses tRNA(Pro) + L-proline + ATP = L-prolyl-tRNA(Pro) + AMP + diphosphate. In terms of biological role, catalyzes the attachment of proline to tRNA(Pro) in a two-step reaction: proline is first activated by ATP to form Pro-AMP and then transferred to the acceptor end of tRNA(Pro). As ProRS can inadvertently accommodate and process non-cognate amino acids such as alanine and cysteine, to avoid such errors it has two additional distinct editing activities against alanine. One activity is designated as 'pretransfer' editing and involves the tRNA(Pro)-independent hydrolysis of activated Ala-AMP. The other activity is designated 'posttransfer' editing and involves deacylation of mischarged Ala-tRNA(Pro). The misacylated Cys-tRNA(Pro) is not edited by ProRS. The sequence is that of Proline--tRNA ligase from Marinobacter nauticus (strain ATCC 700491 / DSM 11845 / VT8) (Marinobacter aquaeolei).